Reading from the N-terminus, the 357-residue chain is Cobalt-precorrin-5B C(1)-methyltransferase (357 aa).

Belongs to the CbiD family.

The catalysed reaction is Co-precorrin-5B + S-adenosyl-L-methionine = Co-precorrin-6A + S-adenosyl-L-homocysteine. It functions in the pathway cofactor biosynthesis; adenosylcobalamin biosynthesis; cob(II)yrinate a,c-diamide from sirohydrochlorin (anaerobic route): step 6/10. Catalyzes the methylation of C-1 in cobalt-precorrin-5B to form cobalt-precorrin-6A. This is Cobalt-precorrin-5B C(1)-methyltransferase from Gloeobacter violaceus (strain ATCC 29082 / PCC 7421).